The primary structure comprises 360 residues: DNA replication and repair protein RecF (360 aa).

An ATP-binding site is contributed by 30-37 (GVNGAGKT).

Belongs to the RecF family.

The protein localises to the cytoplasm. Functionally, the RecF protein is involved in DNA metabolism; it is required for DNA replication and normal SOS inducibility. RecF binds preferentially to single-stranded, linear DNA. It also seems to bind ATP. The sequence is that of DNA replication and repair protein RecF from Thioalkalivibrio sulfidiphilus (strain HL-EbGR7).